Consider the following 336-residue polypeptide: tRNA-modifying protein YgfZ (336 aa).

W28 and W191 together coordinate folate.

Belongs to the tRNA-modifying YgfZ family.

The protein resides in the cytoplasm. Its function is as follows. Folate-binding protein involved in regulating the level of ATP-DnaA and in the modification of some tRNAs. It is probably a key factor in regulatory networks that act via tRNA modification, such as initiation of chromosomal replication. The sequence is that of tRNA-modifying protein YgfZ from Hamiltonella defensa subsp. Acyrthosiphon pisum (strain 5AT).